The chain runs to 774 residues: Ent-beyerene synthase KSL4, chloroplastic (774 aa).

The transit peptide at 1 to 35 (MLLGSTNTLRISSHGKEWEGKTLTGMPLGKVNQRV) directs the protein to the chloroplast. D525, D529, N668, D669, T672, and E676 together coordinate Mg(2+). A DDXXD motif motif is present at residues 525–529 (DDFFD).

Belongs to the terpene synthase family. It depends on Mg(2+) as a cofactor.

The protein localises to the plastid. The protein resides in the chloroplast. It catalyses the reaction ent-copalyl diphosphate = ent-beyerene + diphosphate. It carries out the reaction ent-copalyl diphosphate = ent-atiserene + diphosphate. The enzyme catalyses ent-copalyl diphosphate = ent-kaur-16-ene + diphosphate. Its pathway is secondary metabolite biosynthesis; terpenoid biosynthesis. In terms of biological role, diterpene cyclase involved in the biosynthesis of labdane-related diterpenoids (LRDs) natural products. Catalyzes the cyclization of ent-CDP into ent-beyerene as a major and ent-kaurene and ent-atiserene as minor products. The polypeptide is Ent-beyerene synthase KSL4, chloroplastic (Ricinus communis (Castor bean)).